Here is a 132-residue protein sequence, read N- to C-terminus: MAPSPRTGSRQDATALPSMSSTFWAFMILASLLIAYCSQLAAGTCEIVTLDRDSSQPRRTIARQTARCACRKGQIAGTTRARPACVDARIIRTKQWCDMLPCLEGEGCDLLINRSGWTCTQPGGRIKTTTVS.

A signal peptide spans 1–43 (MAPSPRTGSRQDATALPSMSSTFWAFMILASLLIAYCSQLAAG). Residue asparagine 113 is glycosylated (N-linked (GlcNAc...) asparagine).

This sequence belongs to the TAFA family.

The protein resides in the secreted. In terms of biological role, acts as a chemokine-like protein by regulating cell proliferation and migration through activation of G protein-coupled receptors (GPCRs), such as S1PR2 and FPR2. Stimulates chemotactic migration of macrophages mediated by the MAPK3/ERK1 and AKT1 pathway. Blocks TNFSF11/RANKL-induced osteoclast formation from macrophages by inhibiting up-regulation of osteoclast fusogenic and differentiation genes. Stimulation of macrophage migration and inhibition of osteoclast formation is mediated through the GPCR FPR2. Acts as an adipokine by negatively regulating vascular smooth muscle cell (VSMC) proliferation and migration in response to platelet-derived growth factor stimulation via GPCR S1PR2 and G protein GNA12/GNA13-transmitted RHOA signaling. Inhibits injury-induced cell proliferation and neointima formation in the femoral arteries. This Bos taurus (Bovine) protein is Chemokine-like protein TAFA-5 (TAFA5).